Here is a 361-residue protein sequence, read N- to C-terminus: DNA replication and repair protein RecF (361 aa).

30–37 (GANGSGKT) provides a ligand contact to ATP.

It belongs to the RecF family.

The protein resides in the cytoplasm. Functionally, the RecF protein is involved in DNA metabolism; it is required for DNA replication and normal SOS inducibility. RecF binds preferentially to single-stranded, linear DNA. It also seems to bind ATP. This chain is DNA replication and repair protein RecF, found in Pectobacterium atrosepticum (strain SCRI 1043 / ATCC BAA-672) (Erwinia carotovora subsp. atroseptica).